Consider the following 157-residue polypeptide: MKESILDVLLYLFEHYFSEDADLVRDRDSLQNGLIQAGFSPAEISKAFDWLDALSEQRPSVARPHVDGPVRIYHGQELDKLDVDCRGFLLFLEQHRILDADQRELVLDRAMALDQDELDLDDLKWVVLMVLFNQPGAEAAYAWMETQMFLDEPEPVH.

The protein belongs to the Smg family.

The protein is Protein Smg homolog of Xanthomonas oryzae pv. oryzae (strain MAFF 311018).